The primary structure comprises 53 residues: Chlorophyll a-b binding protein 1, chloroplastic (53 aa).

A chlorophyll b-binding site is contributed by F18. E48 and H51 together coordinate chlorophyll a. Chlorophyll b is bound at residue R53.

This sequence belongs to the light-harvesting chlorophyll a/b-binding (LHC) protein family. In terms of assembly, the LHC complex consists of chlorophyll a-b binding proteins. Binds at least 14 chlorophylls (8 Chl-a and 6 Chl-b) and carotenoids such as lutein and neoxanthin. serves as cofactor. Photoregulated by reversible phosphorylation of its threonine residues.

The protein resides in the plastid. The protein localises to the chloroplast thylakoid membrane. In terms of biological role, the light-harvesting complex (LHC) functions as a light receptor, it captures and delivers excitation energy to photosystems with which it is closely associated. This Populus euphratica (Euphrates poplar) protein is Chlorophyll a-b binding protein 1, chloroplastic.